The sequence spans 653 residues: J protein JJJ2 (653 aa).

The region spanning 14–78 (TLYSVLNLKY…KEKMKYDSKL (65 aa)) is the J domain. Disordered stretches follow at residues 85–308 (DYSP…SSTE) and 490–512 (VSPK…EENL). 2 stretches are compositionally biased toward polar residues: residues 161 to 171 (NAKSYQNSKKS) and 187 to 200 (ATSF…SSSV). Over residues 213–241 (SGSAVGSESRISSSGSESSSNVNSATGSS) the composition is skewed to low complexity. Residues 298-308 (PVKTTPNSSTE) are compositionally biased toward polar residues.

The protein localises to the cytoplasm. It localises to the nucleus. This Kluyveromyces lactis (strain ATCC 8585 / CBS 2359 / DSM 70799 / NBRC 1267 / NRRL Y-1140 / WM37) (Yeast) protein is J protein JJJ2 (JJJ2).